Reading from the N-terminus, the 349-residue chain is Alpha-centractin (349 aa).

At methionine 1 the chain carries N-acetylmethionine.

The protein belongs to the actin family. ARP1 subfamily. As to quaternary structure, part of the ACTR1A/ACTB filament around which the dynactin complex is built. The filament contains 8 copies of ACTR1A and 1 ACTB. Interacts with dynein and adapters such as BICD2. Interacts with BCCIP (isoform 2/alpha).

The protein resides in the cytoplasm. It is found in the cytoskeleton. It localises to the microtubule organizing center. The protein localises to the centrosome. Its subcellular location is the cell cortex. Part of the ACTR1A/ACTB filament around which the dynactin complex is built. The dynactin multiprotein complex activates the molecular motor dynein for ultra-processive transport along microtubules. This is Alpha-centractin (ACTR1A) from Sus scrofa (Pig).